Reading from the N-terminus, the 657-residue chain is Glycogen debranching enzyme (657 aa).

The active-site Nucleophile is Asp336. Glu371 acts as the Proton donor in catalysis. Positions 458 to 467 (NEANGEENRD) are enriched in basic and acidic residues. The disordered stretch occupies residues 458-479 (NEANGEENRDGTNNNYSNNHGK).

The protein belongs to the glycosyl hydrolase 13 family.

It carries out the reaction Hydrolysis of (1-&gt;6)-alpha-D-glucosidic linkages to branches with degrees of polymerization of three or four glucose residues in limit dextrin.. It functions in the pathway glycan degradation; glycogen degradation. Its function is as follows. Removes maltotriose and maltotetraose chains that are attached by 1,6-alpha-linkage to the limit dextrin main chain, generating a debranched limit dextrin. This is Glycogen debranching enzyme from Escherichia coli (strain K12 / DH10B).